We begin with the raw amino-acid sequence, 277 residues long: Undecaprenyl-diphosphatase 1 (277 aa).

7 consecutive transmembrane segments (helical) span residues 46-66, 95-115, 119-139, 165-185, 191-211, 216-236, and 256-276; these read VVGF…VYFF, WWVI…KSLI, LASL…MWAA, ILAL…TALI, VAAT…AGLY, ALGT…SFVV, and FVIY…TGVL.

It belongs to the UppP family.

The protein resides in the cell membrane. The enzyme catalyses di-trans,octa-cis-undecaprenyl diphosphate + H2O = di-trans,octa-cis-undecaprenyl phosphate + phosphate + H(+). Its function is as follows. Catalyzes the dephosphorylation of undecaprenyl diphosphate (UPP). Confers resistance to bacitracin. The protein is Undecaprenyl-diphosphatase 1 of Streptomyces avermitilis (strain ATCC 31267 / DSM 46492 / JCM 5070 / NBRC 14893 / NCIMB 12804 / NRRL 8165 / MA-4680).